Here is an 852-residue protein sequence, read N- to C-terminus: Protein SEY1 (852 aa).

Topologically, residues 1-738 are cytoplasmic; it reads MNGHFAAVGN…KRSAIGGITQ (738 aa). The 237-residue stretch at 47–283 folds into the GB1/RHD3-type G domain; sequence GFNYHLISVF…FVGGVFLPEY (237 aa). Position 57–64 (57–64) interacts with GTP; that stretch reads GSQSTGKS. Positions 475–500 form a coiled coil; sequence QYRLFEKELDEVSARLRKEEMRRLAI. A helical transmembrane segment spans residues 739 to 759; that stretch reads VPLYFYIVLLIFGWNEIVMVL. Residues 760–762 are Lumenal-facing; the sequence is RNP. The chain crosses the membrane as a helical span at residues 763-783; the sequence is MLFMLLLVMGGGTYVAYTLNL. Over 784–852 the chain is Cytoplasmic; sequence LGPMMQMANA…AQEVEEDDDI (69 aa). Positions 825–852 are disordered; it reads RSQDNGIGMDRLDSRGKKAQEVEEDDDI. The segment covering 834 to 845 has biased composition (basic and acidic residues); the sequence is DRLDSRGKKAQE.

Belongs to the TRAFAC class dynamin-like GTPase superfamily. GB1/RHD3 GTPase family. RHD3 subfamily.

It localises to the endoplasmic reticulum membrane. In terms of biological role, cooperates with the reticulon proteins and tubule-shaping DP1 family proteins to generate and maintain the structure of the tubular endoplasmic reticulum network. Has GTPase activity, which is required for its function in ER organization. The polypeptide is Protein SEY1 (Chaetomium globosum (strain ATCC 6205 / CBS 148.51 / DSM 1962 / NBRC 6347 / NRRL 1970) (Soil fungus)).